The primary structure comprises 790 residues: cAMP and cAMP-inhibited cGMP 3',5'-cyclic phosphodiesterase 10A (790 aa).

3',5'-cyclic AMP contacts are provided by residues Arg-290–Cys-291, Ile-334–Ala-335, Thr-368, Gln-387, and His-519. One can recognise a PDEase domain in the interval Thr-446–Glu-763. His-519 (proton donor) is an active-site residue. His-519 is a 3',5'-cyclic GMP binding site. A divalent metal cation contacts are provided by His-523, His-557, Asp-558, and Asp-668. 3',5'-cyclic AMP is bound at residue Gln-720. Gln-720 contacts 3',5'-cyclic GMP. A disordered region spans residues Trp-768–Asp-790. Positions Thr-780–Asp-790 are enriched in basic and acidic residues.

The protein belongs to the cyclic nucleotide phosphodiesterase family. Homodimer. A divalent metal cation serves as cofactor. As to expression, detected in striatum (at protein level). Detected in testis and brain.

It localises to the cytoplasm. Its subcellular location is the cytosol. The enzyme catalyses a nucleoside 3',5'-cyclic phosphate + H2O = a nucleoside 5'-phosphate + H(+). It catalyses the reaction 3',5'-cyclic AMP + H2O = AMP + H(+). The catalysed reaction is 3',5'-cyclic GMP + H2O = GMP + H(+). The protein operates within purine metabolism; 3',5'-cyclic AMP degradation; AMP from 3',5'-cyclic AMP: step 1/1. It participates in purine metabolism; 3',5'-cyclic GMP degradation; GMP from 3',5'-cyclic GMP: step 1/1. Plays a role in signal transduction by regulating the intracellular concentration of cyclic nucleotides. Can hydrolyze both cAMP and cGMP, but has higher affinity for cAMP and is more efficient with cAMP as substrate. May play a critical role in regulating cAMP and cGMP levels in the striatum, a region of the brain that contributes to the control of movement and cognition. This chain is cAMP and cAMP-inhibited cGMP 3',5'-cyclic phosphodiesterase 10A (Pde10a), found in Mus musculus (Mouse).